Consider the following 506-residue polypeptide: Putative amidase (506 aa).

Catalysis depends on charge relay system residues K121 and S196. Residue S220 is the Acyl-ester intermediate of the active site.

This sequence belongs to the amidase family.

It catalyses the reaction a monocarboxylic acid amide + H2O = a monocarboxylate + NH4(+). The chain is Putative amidase from Synechocystis sp. (strain ATCC 27184 / PCC 6803 / Kazusa).